Reading from the N-terminus, the 947-residue chain is DNA mismatch repair protein MutS (947 aa).

Residue 620 to 627 (GPNMSGKS) coordinates ATP.

Belongs to the DNA mismatch repair MutS family.

This protein is involved in the repair of mismatches in DNA. It is possible that it carries out the mismatch recognition step. This protein has a weak ATPase activity. The polypeptide is DNA mismatch repair protein MutS (Clostridioides difficile (strain 630) (Peptoclostridium difficile)).